Here is a 115-residue protein sequence, read N- to C-terminus: Nucleoid-associated protein alr5067 (115 aa).

It belongs to the YbaB/EbfC family. As to quaternary structure, homodimer.

It is found in the cytoplasm. The protein localises to the nucleoid. Functionally, binds to DNA and alters its conformation. May be involved in regulation of gene expression, nucleoid organization and DNA protection. This Nostoc sp. (strain PCC 7120 / SAG 25.82 / UTEX 2576) protein is Nucleoid-associated protein alr5067.